Here is a 306-residue protein sequence, read N- to C-terminus: Brix domain-containing protein C4F8.04 (306 aa).

Residues 16-49 (KALHQKNKDKLERRKERAKEEEKDPEKKRLRLSE) are disordered. The span at 21-42 (KNKDKLERRKERAKEEEKDPEK) shows a compositional bias: basic and acidic residues. The region spanning 94-283 (PKLLVTTSKR…LRMVQKGVWD (190 aa)) is the Brix domain.

The polypeptide is Brix domain-containing protein C4F8.04 (Schizosaccharomyces pombe (strain 972 / ATCC 24843) (Fission yeast)).